The primary structure comprises 458 residues: tRNA modification GTPase MnmE (458 aa).

Residues arginine 26, glutamate 88, and arginine 127 each contribute to the (6S)-5-formyl-5,6,7,8-tetrahydrofolate site. Residues 224–378 enclose the TrmE-type G domain; it reads GLSTAIIGRP…IEDRINQLFF (155 aa). Asparagine 234 is a K(+) binding site. GTP contacts are provided by residues 234-239, 253-259, and 278-281; these read NVGKSS, TDIAGTT, and DTAG. Residue serine 238 participates in Mg(2+) binding. Residues threonine 253, isoleucine 255, and threonine 258 each coordinate K(+). Threonine 259 is a binding site for Mg(2+). (6S)-5-formyl-5,6,7,8-tetrahydrofolate is bound at residue lysine 458.

The protein belongs to the TRAFAC class TrmE-Era-EngA-EngB-Septin-like GTPase superfamily. TrmE GTPase family. As to quaternary structure, homodimer. Heterotetramer of two MnmE and two MnmG subunits. K(+) is required as a cofactor.

It localises to the cytoplasm. Exhibits a very high intrinsic GTPase hydrolysis rate. Involved in the addition of a carboxymethylaminomethyl (cmnm) group at the wobble position (U34) of certain tRNAs, forming tRNA-cmnm(5)s(2)U34. This is tRNA modification GTPase MnmE from Streptococcus pyogenes serotype M12 (strain MGAS9429).